A 364-amino-acid chain; its full sequence is Tyrosine--tRNA ligase (364 aa).

Positions 41, 167, 171, 174, and 189 each coordinate L-tyrosine. The 'KMSKS' region motif lies at 238-242; that stretch reads KMSKS. Residue Lys241 participates in ATP binding.

It belongs to the class-I aminoacyl-tRNA synthetase family. TyrS type 4 subfamily. As to quaternary structure, homodimer.

The protein resides in the cytoplasm. The enzyme catalyses tRNA(Tyr) + L-tyrosine + ATP = L-tyrosyl-tRNA(Tyr) + AMP + diphosphate + H(+). In terms of biological role, catalyzes the attachment of tyrosine to tRNA(Tyr) in a two-step reaction: tyrosine is first activated by ATP to form Tyr-AMP and then transferred to the acceptor end of tRNA(Tyr). In Sulfurisphaera tokodaii (strain DSM 16993 / JCM 10545 / NBRC 100140 / 7) (Sulfolobus tokodaii), this protein is Tyrosine--tRNA ligase.